A 518-amino-acid chain; its full sequence is MNIQTQAFIAVTAQPIPYYADTTAIFNTLCQSNSNSLLLDSAEIGSKNSLQSLILVNAAVKITCLGHNVTFKALNNNGKQVLKEIHPKLTALGKVSAVNFEDEFSVQFLPLDNQLDEDSKLQSATIFDGLRVISSLYQHSQTPIFLGGLFAYDLVANFIPMDGITLKNDGINCPDYSFYLAEHLITIDHQNQQATLKSFCFAQEEQVNIAKTSLSIAQKLKNIDHVLSIKAASDEVKTNFDDPEFTGIVKALKHHINIGDVFQIVPSRRFSLACPNTLASYAQLKQNNPSPYMFYMNDEDFILFGASPESALKYAPENRQLEIYPIAGSRPRGFDAHGNIDPELDARLELELRLDHKEQAEHLMLVDLARNDIARVCQSGTRKVAELMQVDRYSHIMHLVSRVVGKLRPELDALHAYQACMNMGTLTGAPKIKAMQLIYQFEQQKRHSYGGAVGYLTSDGHFDTCIVIRSAFVQNGMAHVQAGCGEVLDSDPQMEADETRHKAAAVLKAIRQVNTQAK.

L-tryptophan is bound by residues serine 41 and 291-293; that span reads PYM. 328-329 lines the chorismate pocket; the sequence is GS. Mg(2+) is bound at residue glutamate 361. Chorismate is bound by residues tyrosine 449, arginine 469, 483 to 485, and glycine 485; that span reads GCG. Glutamate 498 contacts Mg(2+).

It belongs to the anthranilate synthase component I family. Heterotetramer consisting of two non-identical subunits: a beta subunit (TrpG) and a large alpha subunit (TrpE). Mg(2+) serves as cofactor.

It carries out the reaction chorismate + L-glutamine = anthranilate + pyruvate + L-glutamate + H(+). The protein operates within amino-acid biosynthesis; L-tryptophan biosynthesis; L-tryptophan from chorismate: step 1/5. Its activity is regulated as follows. Feedback inhibited by tryptophan. In terms of biological role, part of a heterotetrameric complex that catalyzes the two-step biosynthesis of anthranilate, an intermediate in the biosynthesis of L-tryptophan. In the first step, the glutamine-binding beta subunit (TrpG) of anthranilate synthase (AS) provides the glutamine amidotransferase activity which generates ammonia as a substrate that, along with chorismate, is used in the second step, catalyzed by the large alpha subunit of AS (TrpE) to produce anthranilate. In the absence of TrpG, TrpE can synthesize anthranilate directly from chorismate and high concentrations of ammonia. The chain is Anthranilate synthase component 1 (trpE) from Haemophilus influenzae (strain ATCC 51907 / DSM 11121 / KW20 / Rd).